A 423-amino-acid chain; its full sequence is Testin (423 aa).

Disordered regions lie at residues 1–21 and 138–169; these read MSATHPTRLGTRTKESNACAS and EKQPVAGSEGAQYRKKQLAKQLPAHDQDPSKC. The PET domain maps to 97 to 204; it reads MILTNPVAAK…GDVKFPSEMN (108 aa). Residues 160-169 show a composition bias toward basic and acidic residues; the sequence is PAHDQDPSKC. LIM zinc-binding domains are found at residues 236–299, 301–361, and 364–423; these read YSCY…CDSE, PRCA…NHAV, and QGCH…RMMS.

The protein belongs to the prickle / espinas / testin family. As to quaternary structure, interacts via LIM domain 1 with ZYX. Interacts (via LIM domain 3) with ENAH and VASP. Interacts with ALKBH4, talin, actin, alpha-actinin, GRIP1 and PXN. Interacts (via LIM domain 2) with ACTL7A (via N-terminus). Heterodimer with ACTL7A; the heterodimer interacts with ENAH to form a heterotrimer. Detected at the acrosome of round spermatids (at protein level). Isoform TES1 transcript is highly expressed in adult testis and detected at low levels in other tissues. Isoform TES2 transcript is highly expressed in testis, kidney and spleen; intermediate in thymus, submaxillary gland and lung; detected at low levels in other tissues.

It localises to the cytoplasm. The protein localises to the cell junction. The protein resides in the focal adhesion. Functionally, scaffold protein that may play a role in cell adhesion, cell spreading and in the reorganization of the actin cytoskeleton. Plays a role in the regulation of cell proliferation. May act as a tumor suppressor. The polypeptide is Testin (Tes) (Mus musculus (Mouse)).